Reading from the N-terminus, the 461-residue chain is Lysosomal proton-coupled steroid conjugate and bile acid symporter SLC46A3 (461 aa).

Positions 1 to 25 (MKILFVEPAIFLSAFAMTLTGPLTT) are cleaved as a signal peptide. The Extracellular portion of the chain corresponds to 26-73 (QYVYRRIWEETGNYTFSSDSNISECEKNKSSPIFAFQEEVQKKVSRFN). Asparagine 38, asparagine 46, and asparagine 53 each carry an N-linked (GlcNAc...) asparagine glycan. The helical transmembrane segment at 74-94 (LQMDISGLIPGLVSTFILLSI) threads the bilayer. Residues 95–101 (SDHYGRK) lie on the Cytoplasmic side of the membrane. Residues 102–124 (FPMILSSVGALATSVWLCLLCYF) form a helical membrane-spanning segment. At 125–133 (AFPFQLLIA) the chain is on the extracellular side. The helical transmembrane segment at 134 to 156 (STFIGAFCGNYTTFWGACFAYIV) threads the bilayer. The Cytoplasmic segment spans residues 157 to 170 (DQCKEHKQKTIRIA). The helical transmembrane segment at 171–191 (IIDFLLGLVTGLTGLSSGYFI) threads the bilayer. Residues 192-197 (RELGFE) are Extracellular-facing. A helical membrane pass occupies residues 198-218 (WSFLIIAVSLAVNLIYILFFL). Residues 219–261 (GDPVKECSSQNVTMSCSEGFKNLFYRTYMLFKNASGKRRFLLC) are Cytoplasmic-facing. The helical transmembrane segment at 262 to 282 (LLLFTVITYFFVVIGIAPIFI) threads the bilayer. Residues 283 to 294 (LYELDSPLCWNE) are Extracellular-facing. Residues 295 to 315 (VFIGYGSALGSASFLTSFLGI) traverse the membrane as a helical segment. Residues 316–324 (WLFSYCMED) lie on the Cytoplasmic side of the membrane. The chain crosses the membrane as a helical span at residues 325–345 (IHMAFIGIFTTMTGMAMTAFA). The Extracellular portion of the chain corresponds to 346 to 347 (ST). A helical membrane pass occupies residues 348-368 (TLMMFLARVPFLFTIVPFSVL). Topologically, residues 369 to 382 (RSMLSKVVRSTEQG) are cytoplasmic. The chain crosses the membrane as a helical span at residues 383–403 (TLFACIAFLETLGGVTAVSTF). Topologically, residues 404–415 (NGIYSATVAWYP) are extracellular. The chain crosses the membrane as a helical span at residues 416 to 436 (GFTFLLSAGLLLLPAISLCVV). At 437–461 (KCTSWNEGSYELLIQEESSEDASDR) the chain is on the cytoplasmic side. A Tyrosine-based lysosomal-sorting motif motif is present at residues 446–449 (YELL).

This sequence belongs to the major facilitator superfamily. SLC46A family.

Its subcellular location is the lysosome membrane. It carries out the reaction estrone 3-sulfate(out) + n H(+)(out) = estrone 3-sulfate(in) + n H(+)(in). The enzyme catalyses 25-hydroxyvitamin D3 sulfate(out) + n H(+)(out) = 25-hydroxyvitamin D3 sulfate(in) + n H(+)(in). It catalyses the reaction cholate(out) + n H(+)(out) = cholate(in) + n H(+)(in). The catalysed reaction is glycocholate(out) + n H(+)(out) = glycocholate(in) + n H(+)(in). It carries out the reaction taurocholate(out) + n H(+)(out) = taurocholate(in) + n H(+)(in). The enzyme catalyses dehydroepiandrosterone 3-sulfate(out) + n H(+)(out) = dehydroepiandrosterone 3-sulfate(in) + n H(+)(in). It catalyses the reaction N-acetyl-D-muramoyl-L-alanyl-D-isoglutamine(out) + n H(+)(out) = N-acetyl-D-muramoyl-L-alanyl-D-isoglutamine(in) + n H(+)(in). The catalysed reaction is 2',3'-cGAMP(out) + n H(+)(out) = 2',3'-cGAMP(in) + n H(+)(in). Functionally, lysosomal proton-coupled steroid conjugate and bile acid transporter. Preferentially recognizes lipophilic steroid conjugates or bile acis as endogenous substrates and seems to mediate escape from lysosomes to the cytoplasm. Modulates hepatic cytosolic copper homeostasis, maybe acting as a lysosomal copper transporter and sequestering copper ions in the lysosome. Transports catabolites of non-cleavable antibody-drug conjugates from the lysosome to the cytoplasm. Delivers pathogen-associated molecular patterns to cytosolic pattern recognition receptors as part of the innate immune response to microbes. Selectively transports bacterial muramyl dipeptide (MDP) into the cytosol for recognition by NOD2, triggering inflammatory responses. Likely acts as a redundant importer of cyclic GMP-AMP dinucleotides (cGAMPs) in monocyte and macrophage cell lineages. The transport mechanism, its electrogenicity and stoichiometry remain to be elucidated. The protein is Lysosomal proton-coupled steroid conjugate and bile acid symporter SLC46A3 of Homo sapiens (Human).